The primary structure comprises 264 residues: 2-hydroxyhexa-2,4-dienoate hydratase (264 aa).

The protein belongs to the hydratase/decarboxylase family.

It carries out the reaction (2Z,4Z)-2-hydroxyhexa-2,4-dienoate + H2O = 4-hydroxy-2-oxohexanoate. Involved in the catatabolism of testosterone. Catalyzes the hydration of 2-hydroxyhexa-2,4-dienoic acid to 4-hydroxy-2-oxohexanoic acid. The polypeptide is 2-hydroxyhexa-2,4-dienoate hydratase (tesE) (Comamonas testosteroni (Pseudomonas testosteroni)).